The sequence spans 335 residues: Putative hydrogenase expression/formation protein MJ0676 (335 aa).

The protein belongs to the HypE family.

This chain is Putative hydrogenase expression/formation protein MJ0676, found in Methanocaldococcus jannaschii (strain ATCC 43067 / DSM 2661 / JAL-1 / JCM 10045 / NBRC 100440) (Methanococcus jannaschii).